Consider the following 475-residue polypeptide: Ribulose bisphosphate carboxylase large chain (475 aa).

The propeptide occupies Met-1–Ser-2. At Pro-3 the chain carries N-acetylproline. At Lys-14 the chain carries N6,N6,N6-trimethyllysine. Substrate is bound by residues Asn-123 and Thr-173. Residue Lys-175 is the Proton acceptor of the active site. Lys-177 is a substrate binding site. Positions 201, 203, and 204 each coordinate Mg(2+). Lys-201 carries the N6-carboxylysine modification. Residue His-294 is the Proton acceptor of the active site. The substrate site is built by Arg-295, His-327, and Ser-379.

It belongs to the RuBisCO large chain family. Type I subfamily. As to quaternary structure, heterohexadecamer of 8 large chains and 8 small chains; disulfide-linked. The disulfide link is formed within the large subunit homodimers. Mg(2+) serves as cofactor. In terms of processing, the disulfide bond which can form in the large chain dimeric partners within the hexadecamer appears to be associated with oxidative stress and protein turnover.

It is found in the plastid. The protein localises to the chloroplast. The catalysed reaction is 2 (2R)-3-phosphoglycerate + 2 H(+) = D-ribulose 1,5-bisphosphate + CO2 + H2O. It catalyses the reaction D-ribulose 1,5-bisphosphate + O2 = 2-phosphoglycolate + (2R)-3-phosphoglycerate + 2 H(+). Functionally, ruBisCO catalyzes two reactions: the carboxylation of D-ribulose 1,5-bisphosphate, the primary event in carbon dioxide fixation, as well as the oxidative fragmentation of the pentose substrate in the photorespiration process. Both reactions occur simultaneously and in competition at the same active site. In Quercus rubra (Northern red oak), this protein is Ribulose bisphosphate carboxylase large chain.